Consider the following 908-residue polypeptide: Vacuolar membrane protease (908 aa).

The segment at 1–25 (MTSGEEEEGTREQVPVSQPTGTTSI) is disordered. Topologically, residues 1 to 48 (MTSGEEEEGTREQVPVSQPTGTTSIVSTKEKQPNIFIRAIRATFGYRK) are cytoplasmic. The segment covering 15 to 25 (PVSQPTGTTSI) has biased composition (polar residues). The chain crosses the membrane as a helical span at residues 49 to 69 (TSLTLFVLLTIFFTVAFSSYD). Residues 70-381 (NSLDFTIDLP…FSTSVTTLNT (312 aa)) are Vacuolar-facing. Asparagine 143 and asparagine 162 each carry an N-linked (GlcNAc...) asparagine glycan. Histidine 176 and aspartate 188 together coordinate Zn(2+). Glutamate 221 acts as the Proton acceptor in catalysis. Zn(2+) is bound by residues glutamate 222, glutamate 247, and histidine 319. Asparagine 354 carries N-linked (GlcNAc...) asparagine glycosylation. The helical transmembrane segment at 382-402 (INMVLIVLFPVLSGPLLFITV) threads the bilayer. At 403 to 411 (RYKKWNIGT) the chain is on the cytoplasmic side. The chain crosses the membrane as a helical span at residues 412 to 432 (ANLFSLPLAIVITSLVGAVVV). Over 433-449 (NQGFRLVNEFLPASRPM) the chain is Vacuolar. Residues 450 to 470 (LLVTTTTSILLLTYYILLNGI) form a helical membrane-spanning segment. Residues 471 to 480 (NFVSPSGDQK) lie on the Cytoplasmic side of the membrane. A helical transmembrane segment spans residues 481 to 501 (LVSIIQISFIYWIALIFVTRG). Topologically, residues 502–514 (LSQNAIGDDHTGE) are vacuolar. Residues 515–535 (FAFTILFLLEATASLFGLIGW) form a helical membrane-spanning segment. Residues 536-602 (TFTRSVKEPT…MQHFGYDWSL (67 aa)) are Cytoplasmic-facing. The interval 543-584 (EPTGDEEPLLNGRMERYVDGSDDEDDVEEEDDEDQSEEENHQ) is disordered. Residues 562-579 (GSDDEDDVEEEDDEDQSE) show a composition bias toward acidic residues. A helical membrane pass occupies residues 603–623 (QFLLIVPISSLVIYNSGWLVI). Residues 624-638 (DGINKSIQESLVAEN) are Vacuolar-facing. The N-linked (GlcNAc...) asparagine glycan is linked to asparagine 627. A helical membrane pass occupies residues 639 to 659 (FIYLIIQLFSQFWILPILPFV). Over 660–664 (YKLNR) the chain is Cytoplasmic. A helical transmembrane segment spans residues 665–685 (FMVLGLIAFALVGVTLISSVD). At 686-908 (PFNQDNPLKL…LVSLTNRIEV (223 aa)) the chain is on the vacuolar side. 2 N-linked (GlcNAc...) asparagine glycosylation sites follow: asparagine 752 and asparagine 764.

The protein belongs to the peptidase M28 family. Zn(2+) is required as a cofactor.

Its subcellular location is the vacuole membrane. Functionally, may be involved in vacuolar sorting and osmoregulation. The sequence is that of Vacuolar membrane protease from Candida tropicalis (strain ATCC MYA-3404 / T1) (Yeast).